We begin with the raw amino-acid sequence, 164 residues long: Thiol peroxidase (164 aa).

The region spanning 16-162 (LQVGDIAKDF…YEAAINAAKI (147 aa)) is the Thioredoxin domain. C58 acts as the Cysteine sulfenic acid (-SOH) intermediate in catalysis. Residues C58 and C92 are joined by a disulfide bond.

This sequence belongs to the peroxiredoxin family. Tpx subfamily. In terms of assembly, homodimer.

The catalysed reaction is a hydroperoxide + [thioredoxin]-dithiol = an alcohol + [thioredoxin]-disulfide + H2O. Its function is as follows. Thiol-specific peroxidase that catalyzes the reduction of hydrogen peroxide and organic hydroperoxides to water and alcohols, respectively. Plays a role in cell protection against oxidative stress by detoxifying peroxides. In Streptococcus agalactiae serotype III (strain NEM316), this protein is Thiol peroxidase.